The sequence spans 440 residues: 3-phosphoshikimate 1-carboxyvinyltransferase (440 aa).

3-phosphoshikimate contacts are provided by Lys-25, Ser-26, and Arg-30. Residue Lys-25 participates in phosphoenolpyruvate binding. 2 residues coordinate phosphoenolpyruvate: Gly-96 and Arg-124. 3-phosphoshikimate-binding residues include Ser-168, Gln-169, Asp-310, and Lys-337. Gln-169 contacts phosphoenolpyruvate. The Proton acceptor role is filled by Asp-310. Arg-341, Arg-382, and Lys-409 together coordinate phosphoenolpyruvate.

It belongs to the EPSP synthase family. In terms of assembly, monomer.

The protein resides in the cytoplasm. The catalysed reaction is 3-phosphoshikimate + phosphoenolpyruvate = 5-O-(1-carboxyvinyl)-3-phosphoshikimate + phosphate. Its pathway is metabolic intermediate biosynthesis; chorismate biosynthesis; chorismate from D-erythrose 4-phosphate and phosphoenolpyruvate: step 6/7. In terms of biological role, catalyzes the transfer of the enolpyruvyl moiety of phosphoenolpyruvate (PEP) to the 5-hydroxyl of shikimate-3-phosphate (S3P) to produce enolpyruvyl shikimate-3-phosphate and inorganic phosphate. This is 3-phosphoshikimate 1-carboxyvinyltransferase from Chlamydia trachomatis serovar L2 (strain ATCC VR-902B / DSM 19102 / 434/Bu).